The following is a 60-amino-acid chain: Small ribosomal subunit protein eS17 (60 aa).

The protein belongs to the eukaryotic ribosomal protein eS17 family.

This Methanosphaera stadtmanae (strain ATCC 43021 / DSM 3091 / JCM 11832 / MCB-3) protein is Small ribosomal subunit protein eS17.